We begin with the raw amino-acid sequence, 321 residues long: Sideroflexin-3 (321 aa).

An N-acetylmethionine modification is found at M1. The next 4 membrane-spanning stretches (helical) occupy residues L146–L164, L174–L194, I225–V245, and L266–F286.

Belongs to the sideroflexin family. Widely expressed.

Its subcellular location is the mitochondrion membrane. It catalyses the reaction L-serine(in) = L-serine(out). In terms of biological role, mitochondrial serine transporter that mediates transport of serine into mitochondria, an important step of the one-carbon metabolism pathway. Mitochondrial serine is converted to glycine and formate, which then exits to the cytosol where it is used to generate the charged folates that serve as one-carbon donors. The chain is Sideroflexin-3 from Mus musculus (Mouse).